The chain runs to 345 residues: Anthranilate phosphoribosyltransferase (345 aa).

Residues Gly-83, 86–87, Thr-91, 93–96, 111–119, and Ser-123 each bind 5-phospho-alpha-D-ribose 1-diphosphate; these read GD, NIST, and KHGNRNLSS. An anthranilate-binding site is contributed by Gly-83. Ser-95 provides a ligand contact to Mg(2+). Position 114 (Asn-114) interacts with anthranilate. Arg-169 provides a ligand contact to anthranilate. Positions 228 and 229 each coordinate Mg(2+).

The protein belongs to the anthranilate phosphoribosyltransferase family. In terms of assembly, homodimer. The cofactor is Mg(2+).

It carries out the reaction N-(5-phospho-beta-D-ribosyl)anthranilate + diphosphate = 5-phospho-alpha-D-ribose 1-diphosphate + anthranilate. It functions in the pathway amino-acid biosynthesis; L-tryptophan biosynthesis; L-tryptophan from chorismate: step 2/5. Its function is as follows. Catalyzes the transfer of the phosphoribosyl group of 5-phosphorylribose-1-pyrophosphate (PRPP) to anthranilate to yield N-(5'-phosphoribosyl)-anthranilate (PRA). The sequence is that of Anthranilate phosphoribosyltransferase from Paracoccus denitrificans (strain Pd 1222).